A 365-amino-acid chain; its full sequence is 3-dehydroquinate synthase (365 aa).

Residues 106-110 (GVIGD), 130-131 (TT), lysine 142, lysine 151, and 169-172 (FFAT) each bind NAD(+). Residues glutamate 184, histidine 247, and histidine 264 each coordinate Zn(2+).

Belongs to the sugar phosphate cyclases superfamily. Dehydroquinate synthase family. Requires Co(2+) as cofactor. The cofactor is Zn(2+). NAD(+) serves as cofactor.

Its subcellular location is the cytoplasm. It catalyses the reaction 7-phospho-2-dehydro-3-deoxy-D-arabino-heptonate = 3-dehydroquinate + phosphate. Its pathway is metabolic intermediate biosynthesis; chorismate biosynthesis; chorismate from D-erythrose 4-phosphate and phosphoenolpyruvate: step 2/7. Its function is as follows. Catalyzes the conversion of 3-deoxy-D-arabino-heptulosonate 7-phosphate (DAHP) to dehydroquinate (DHQ). The chain is 3-dehydroquinate synthase from Listeria monocytogenes serotype 4b (strain CLIP80459).